Here is a 364-residue protein sequence, read N- to C-terminus: Esculetin O-methyltransferase (364 aa).

Residue Asn-132 coordinates bergaptol. The S-adenosyl-L-homocysteine site is built by Gly-209, Asp-232, Asp-252, Met-253, Met-265, and Lys-266. Residue His-270 coordinates bergaptol. His-270 serves as the catalytic Proton acceptor.

This sequence belongs to the class I-like SAM-binding methyltransferase superfamily. Cation-independent O-methyltransferase family. COMT subfamily. Homodimer. In terms of tissue distribution, expressed ubiquitously.

The enzyme catalyses bergaptol + S-adenosyl-L-methionine = bergapten + S-adenosyl-L-homocysteine. It catalyses the reaction xanthotoxol + S-adenosyl-L-methionine = xanthotoxin + S-adenosyl-L-homocysteine + H(+). It carries out the reaction esculetin + S-adenosyl-L-methionine = isoscopoletin + S-adenosyl-L-homocysteine + H(+). The catalysed reaction is esculetin + S-adenosyl-L-methionine = scopoletin + S-adenosyl-L-homocysteine + H(+). Its pathway is aromatic compound metabolism. The protein operates within secondary metabolite biosynthesis. Inhibited by zinc Zn(2+), copper Cu(2+) and silver Ag(+) ions. O-methyltransferase involved in the biosynthesis of methoxylated coumarins natural products such as isoscopoletin, scopoletin, xanthotoxin and bergapten, photosensitizers used for medical purpose such as treating psoriasis and vitiligo or facilitating resistance to microbial infection and other stresses. Catalyzes the methylation of esculetin, bergaptol and xanthotoxol, but seems inactive on scopoletin and isoscopoletin. This Kitagawia praeruptora (Peucedanum praeruptorum) protein is Esculetin O-methyltransferase.